The sequence spans 312 residues: Ribosomal protein L11 methyltransferase (312 aa).

Threonine 162, glycine 183, aspartate 205, and asparagine 248 together coordinate S-adenosyl-L-methionine.

The protein belongs to the methyltransferase superfamily. PrmA family.

It is found in the cytoplasm. The enzyme catalyses L-lysyl-[protein] + 3 S-adenosyl-L-methionine = N(6),N(6),N(6)-trimethyl-L-lysyl-[protein] + 3 S-adenosyl-L-homocysteine + 3 H(+). Its function is as follows. Methylates ribosomal protein L11. This Bacillus cereus (strain B4264) protein is Ribosomal protein L11 methyltransferase.